The chain runs to 282 residues: Shikimate dehydrogenase (NADP(+)) (282 aa).

Shikimate is bound by residues 15 to 17 (SKS) and T62. The Proton acceptor role is filled by K66. Residues N87 and D103 each contribute to the shikimate site. NADP(+)-binding positions include 128–132 (GAGGA), 152–157 (NRTPAK), and M216. A shikimate-binding site is contributed by Y218. G240 serves as a coordination point for NADP(+).

Belongs to the shikimate dehydrogenase family. As to quaternary structure, homodimer.

It carries out the reaction shikimate + NADP(+) = 3-dehydroshikimate + NADPH + H(+). It functions in the pathway metabolic intermediate biosynthesis; chorismate biosynthesis; chorismate from D-erythrose 4-phosphate and phosphoenolpyruvate: step 4/7. Functionally, involved in the biosynthesis of the chorismate, which leads to the biosynthesis of aromatic amino acids. Catalyzes the reversible NADPH linked reduction of 3-dehydroshikimate (DHSA) to yield shikimate (SA). This Nitrosococcus oceani (strain ATCC 19707 / BCRC 17464 / JCM 30415 / NCIMB 11848 / C-107) protein is Shikimate dehydrogenase (NADP(+)).